The sequence spans 505 residues: MVNIRPDEISNIIRQQIDNYDQEVQVANIGTVLQVGDGIARVYGLDEVMAGELLQFEDKEQTVGIALNLESDNVGVVLMGDGRNILEGSSVKSTGKIAQIPVGDEFLGRVVNPLAKPIDAKGTPSVQDTRLIESYAPGIIGRQSVCEPLQTGITAIDSMIPIGRGQRELIIGDRQTGKTTVALDTIINQKGQDVVCVYVAIGQKASSVAQVVSTLEEKGALEYTIVVAANADEPATLQYIAPYTGAALAEYFMYKGKATLVIYDDLTKQAQAYRQMSLLLRRPPGREAYPGDVFYLHSRLLERAAKLNQDLGGGSMTALPIIETQAGDVSAYIPTNVISITDGQIFLSGDLFNSGIRPAINVGISVSRVGSAAQIKAMKQVAGKLKLELAQFAELEAFSQFASDLDKATQNQLARGQRLREILKQAQNSPIPVEEQTAIIYAGINGYLDEVELSQVKDFVLALREDLRNSKPEFGESILSTKKLNPDSEEILKKAISDVAQAFSL.

172–179 serves as a coordination point for ATP; it reads GDRQTGKT.

It belongs to the ATPase alpha/beta chains family. As to quaternary structure, F-type ATPases have 2 components, CF(1) - the catalytic core - and CF(0) - the membrane proton channel. CF(1) has five subunits: alpha(3), beta(3), gamma(1), delta(1), epsilon(1). CF(0) has four main subunits: a, b, b' and c.

The protein localises to the plastid. The protein resides in the chloroplast thylakoid membrane. The enzyme catalyses ATP + H2O + 4 H(+)(in) = ADP + phosphate + 5 H(+)(out). Functionally, produces ATP from ADP in the presence of a proton gradient across the membrane. The alpha chain is a regulatory subunit. The polypeptide is ATP synthase subunit alpha, chloroplastic (Antithamnion sp. (Red alga)).